The chain runs to 289 residues: MGSPDLADAPSPNFAQRGWVDAVDVPGSVQNVGPVKVGHVVAGHNLHAEVSDELEEGVEHVQLRWELVDLNPLYVFAGAQRQQDAPIAPGLLPCRPEDAGYLQDQVSLVGGRGEALLPQTLDIEGQGLVGGPGAVFTPDREVAHLTVVLELGVRVPVLEAGDGAAAAVPAKGDKVIVQDKAARGIHVGLKDPTPVLVLQPRGHVTHTVGMGEGDLVVVAGMVAVAHNGTARDLLHRDPAGGPAVEGAGLEGAEDCKLHVQTLRRAGVEVGLLPKHVHTHAGPIGLAPAQ.

This is an uncharacterized protein from Homo sapiens (Human).